The following is a 716-amino-acid chain: Protein C-mannosyl-transferase DPY19L3 (716 aa).

At 1–43 (MMYIRQRKETKPIEVSEDFPSPKEDVKLEKKLPSGCASGRFWK) the chain is on the cytoplasmic side. The chain crosses the membrane as a helical span at residues 44–64 (ILSSAVGGTVALCIGLLTSVY). Residues 65–154 (LATLHENDLW…RVLPIQKYLE (90 aa)) are Lumenal-facing. Residue Asn118 is glycosylated (N-linked (GlcNAc...) asparagine). Residues 155–182 (PVYFYIYTLFGLQAVYVTALYITSWLLS) traverse the membrane as a helical segment. Over 183-184 (GT) the chain is Cytoplasmic. The segment at residues 185-197 (WLSGLLAALWYVT) is an intramembrane region (name=3). Residues 198-215 (NRIDTTRVEFTIPLRENW) lie on the Cytoplasmic side of the membrane. The name=4 intramembrane region spans 216–230 (ALPFFAIQIAAITYF). Over 231 to 239 (LRPNLQPLS) the chain is Cytoplasmic. A helical transmembrane segment spans residues 240–256 (ERLTLLAIFVSTFLFSL). The Lumenal segment spans residues 257 to 262 (TWQFNQ). The chain crosses the membrane as a helical span at residues 263 to 279 (FMMLLQALVLFILDSLD). At 280–289 (MLPAMKATWL) the chain is on the cytoplasmic side. Residues 290–306 (YGIQISCLLLVCTLQFF) traverse the membrane as a helical segment. At 307–308 (NS) the chain is on the lumenal side. The helical transmembrane segment at 309-323 (MILGSLLISFNLSVL) threads the bilayer. Over 324–338 (IVRKLQKNLKTGSFL) the chain is Cytoplasmic. A helical transmembrane segment spans residues 339–359 (TRIWKLLLHLLLVFCLTLFLN). The Lumenal portion of the chain corresponds to 360–414 (NIIKKVLNLKSDEHIFKFLKAKFGFGATRDFDANLYLCEEAFGLLPLNTFQRLSE). The chain crosses the membrane as a helical span at residues 415–437 (TLLFYAYMFVLVVTVVTASVVAF). Residues 438–465 (HNLSDSTSLKSMDQTRKRAVDLKPEAAY) are Cytoplasmic-facing. Residues 466-485 (NLIHTILFGVLALSTMRMKY) traverse the membrane as a helical segment. Over 486–487 (LW) the chain is Lumenal. Residues 488–499 (TSHMCVFASFGL) traverse the membrane as a helical segment. Residues 500–522 (CSSEVWELLLRLVHLCNPKRIWV) are Cytoplasmic-facing. The helical transmembrane segment at 523-539 (LRYLVPVLTLLYLCYKS) threads the bilayer. At 540–716 (WPGVMDELSE…FHVYKLSRNK (177 aa)) the chain is on the lumenal side. N-linked (GlcNAc...) asparagine glycosylation occurs at Asn704.

Belongs to the dpy-19 family.

The protein localises to the endoplasmic reticulum membrane. It carries out the reaction L-tryptophyl-[protein] + a di-trans,poly-cis-dolichyl beta-D-mannosyl phosphate = C-alpha-D-mannosyl-L-tryptophyl-[protein] + a di-trans,poly-cis-dolichyl phosphate + H(+). It functions in the pathway protein modification; protein glycosylation. Its function is as follows. C-mannosyltransferase that mediates C-mannosylation of tryptophan residues on target proteins. The reaction occurs on the luminal side of the endoplasmic reticulum and involves the transfer of a mannose unit from a dolichylphosphate mannose (Dol-P-Man) donor to an acceptor protein containing a WxxW or WxxC consensus sequence. C-mannosylates RSPO1, a Wnt signaling regulator, preferentially at the first Trp residue in the sequence WxxW. C-mannosylates the netrin receptor UNC5A, preferentially at the third tryptophan of WxxWxxWxxC sequence. The sequence is that of Protein C-mannosyl-transferase DPY19L3 (Dpy19l3) from Mus musculus (Mouse).